The following is a 721-amino-acid chain: Translation initiation factor eIF2B subunit epsilon (721 aa).

The segment covering 1–13 has biased composition (low complexity); it reads MAAPVVAPPGVVV. Positions 1–40 are disordered; that stretch reads MAAPVVAPPGVVVSRANKRSGAGPGGSGGGGARGAEEEPP. N-acetylalanine is present on alanine 2. Arginine 19 carries the post-translational modification Omega-N-methylarginine. The segment covering 22–33 has biased composition (gly residues); that stretch reads AGPGGSGGGGAR. Serine 27 carries the post-translational modification Phosphoserine. Residues lysine 61 and lysine 103 each participate in a glycyl lysine isopeptide (Lys-Gly) (interchain with G-Cter in ubiquitin) cross-link. Position 130 is a phosphoserine (serine 130). Residues lysine 141 and lysine 217 each participate in a glycyl lysine isopeptide (Lys-Gly) (interchain with G-Cter in ubiquitin) cross-link. A Phosphothreonine modification is found at threonine 322. Disordered stretches follow at residues 444–483 and 523–547; these read PEGSVISLHPPDAEEDEDDGEFSDDSGADQEKDKVKMKGY and EESESESEQSMDSEEPDSRGGSPQM. Phosphoserine occurs at positions 450, 466, 469, 532, and 540. Composition is skewed to acidic residues over residues 456 to 471 and 523 to 537; these read AEEDEDDGEFSDDSGA and EESESESEQSMDSEE. In terms of domain architecture, W2 spans 543–720; it reads GSPQMDDIKV…KEAEEESSED (178 aa). Serine 544 is subject to Phosphoserine; by DYRK2. Serine 717 carries the phosphoserine modification.

This sequence belongs to the eIF-2B gamma/epsilon subunits family. As to quaternary structure, component of the translation initiation factor 2B (eIF2B) complex which is a heterodecamer of two sets of five different subunits: alpha, beta, gamma, delta and epsilon. Subunits alpha, beta and delta comprise a regulatory subcomplex and subunits epsilon and gamma comprise a catalytic subcomplex. Within the complex, the hexameric regulatory complex resides at the center, with the two heterodimeric catalytic subcomplexes bound on opposite sides. Post-translationally, phosphorylated at Ser-544 by DYRK2; this is required for subsequent phosphorylation by GSK3B. Phosphorylated on serine and threonine residues by GSK3B; phosphorylation inhibits its function. In terms of processing, polyubiquitinated, probably by NEDD4.

The protein resides in the cytoplasm. It is found in the cytosol. With respect to regulation, activated by the chemical integrated stress response (ISR) inhibitor ISRIB which stimulates guanine nucleotide exchange factor activity for both phosphorylated and unphosphorylated eIF2. Acts as a component of the translation initiation factor 2B (eIF2B) complex, which catalyzes the exchange of GDP for GTP on eukaryotic initiation factor 2 (eIF2) gamma subunit. Its guanine nucleotide exchange factor activity is repressed when bound to eIF2 complex phosphorylated on the alpha subunit, thereby limiting the amount of methionyl-initiator methionine tRNA available to the ribosome and consequently global translation is repressed. This is Translation initiation factor eIF2B subunit epsilon (EIF2B5) from Homo sapiens (Human).